Here is an 883-residue protein sequence, read N- to C-terminus: Collagen, type I, alpha 1b (883 aa).

The interval 1–883 (QMSYVDHSKS…LGGSNDVELR (883 aa)) is disordered. Pro residues predominate over residues 13-33 (PPQPGPMGPMGPRGPPGPPGS). Composition is skewed to low complexity over residues 34 to 57 (SGPQ…AMGS), 113 to 122 (VPGVMGARGR), and 129 to 140 (SGARGNDGNTGP). 2 stretches are compositionally biased toward gly residues: residues 147–161 (TGGE…GNEG) and 185–194 (GTDGGPGAKG). Composition is skewed to low complexity over residues 195 to 205 (SPGAAGLAGAP), 214 to 223 (AQGAVGAPGP), and 230 to 248 (PGAS…PGPA). The span at 285-297 (GADGGAGGKGAPG) shows a compositional bias: gly residues. Composition is skewed to low complexity over residues 310 to 326 (ATGE…PGSK) and 390 to 402 (VGAP…AGPA). Gly residues predominate over residues 415-424 (GAPGLGGPTG). Low complexity predominate over residues 425–444 (ARGAPGPAGNDGAKGEPGAA). Gly residues-rich tracts occupy residues 445-454 (GAPGGLGAPG) and 478-487 (GGKGGDGAPG). The span at 512-542 (AGPTGPRGETGPPGPAGFAGPPGADGQPGAK) shows a compositional bias: low complexity. Gly residues predominate over residues 564–573 (GPKGGAGPPG). Composition is skewed to low complexity over residues 574 to 584 (ATGFPGPAGRV), 717 to 726 (APGAVGPSGK), and 742 to 756 (SGPA…PAGA). Positions 757–771 (KGDRGEAGEAGDRGH) are enriched in basic and acidic residues. Over residues 792 to 812 (PAGASGPAGPRGPAGSNGAPG) the composition is skewed to low complexity. The span at 821–836 (AGPPGPPGPAGPPGPP) shows a compositional bias: pro residues.

It belongs to the fibrillar collagen family.

The chain is Collagen, type I, alpha 1b from Epinephelus costae (Goldblotch grouper).